An 898-amino-acid chain; its full sequence is Protein SOV1, mitochondrial (898 aa).

Residues 1–31 constitute a mitochondrion transit peptide; the sequence is MFKYNRSLCSSALIAKSQIRFYRLKRAPLNY.

The protein resides in the mitochondrion. The polypeptide is Protein SOV1, mitochondrial (SOV1) (Saccharomyces cerevisiae (strain ATCC 204508 / S288c) (Baker's yeast)).